A 117-amino-acid polypeptide reads, in one-letter code: Ribosome-binding factor A (117 aa).

This sequence belongs to the RbfA family. In terms of assembly, monomer. Binds 30S ribosomal subunits, but not 50S ribosomal subunits or 70S ribosomes.

Its subcellular location is the cytoplasm. Functionally, one of several proteins that assist in the late maturation steps of the functional core of the 30S ribosomal subunit. Associates with free 30S ribosomal subunits (but not with 30S subunits that are part of 70S ribosomes or polysomes). Required for efficient processing of 16S rRNA. May interact with the 5'-terminal helix region of 16S rRNA. In Syntrophobacter fumaroxidans (strain DSM 10017 / MPOB), this protein is Ribosome-binding factor A.